The primary structure comprises 521 residues: AAA ATPase forming ring-shaped complexes (521 aa).

The stretch at 4-44 forms a coiled coil; that stretch reads TEDLAALNDRLMAKNHALAEALSRAGKELTKAKSQLAQLAQ. 235 to 240 contributes to the ATP binding site; it reads GNGKTM.

Belongs to the AAA ATPase family. As to quaternary structure, homohexamer. Assembles into a hexameric ring structure.

The protein is AAA ATPase forming ring-shaped complexes of Bifidobacterium longum (strain DJO10A).